The following is a 726-amino-acid chain: Cyclic nucleotide-gated ion channel 2 (726 aa).

Residues 1 to 127 (MPSHPNFIFR…SKRVQRWNRA (127 aa)) lie on the Cytoplasmic side of the membrane. Residues 26–46 (IDENSNLQINGGDSSSSGSDE) form a disordered region. The span at 36-45 (GGDSSSSGSD) shows a compositional bias: low complexity. Residues 128-148 (LLLARGMALAVDPLFFYALSI) form a helical membrane-spanning segment. Residues 149-162 (GRTTGPACLYMDGA) lie on the Extracellular side of the membrane. A helical membrane pass occupies residues 163-183 (FAAVVTVLRTCLDAVHLWHVW). Over 184-219 (LQFRLAYVSRESLVVGCGKLVWDPRAIASHYARSLT) the chain is Cytoplasmic. Residues 220–240 (GFWFDVIVILPVPQAVFWLVV) form a helical membrane-spanning segment. The Extracellular portion of the chain corresponds to 241 to 254 (PKLIREEKVKLIMT). The helical transmembrane segment at 255–275 (ILLLIFLFQFLPKIYHCICLM) threads the bilayer. The Cytoplasmic segment spans residues 276-282 (RRMQKVT). Residues 283–303 (GYIFGTIWWGFALNLIAYFIA) form a helical membrane-spanning segment. Residues 304 to 424 (SHVAGGCWYV…ANDLEPTSNW (121 aa)) are Extracellular-facing. The chain crosses the membrane as a helical span at residues 425–445 (LEVIFSIVMVLSGLLLFTLLI). Residues 446–726 (GNIQVFLHAV…MSIRPHDHLE (281 aa)) are Cytoplasmic-facing. Residues 531 to 661 (LFRG…ARYY) and D600 each bind a nucleoside 3',5'-cyclic phosphate. A calmodulin-binding region spans residues 645–661 (FRYKFANERLKRTARYY). The IQ domain occupies 666–695 (RTWAAVNIQMAWRRRRKRTRGENIGGSMSP).

The protein belongs to the cyclic nucleotide-gated cation channel (TC 1.A.1.5) family. As to quaternary structure, homotetramer or heterotetramer (Potential). Binds calmodulin-1/4 with a higher affinity than calmodulin-2/3/5. As to expression, expressed in the whole plant but only weakly in roots. Strongly expressed in the expanded cotyledons of 14-day-old seedlings and detected later in leaves after the transition to flowering. Also detected in flowers during organ senescence and in the dehiscence zone of siliques.

Its subcellular location is the cell membrane. Acts as a cyclic nucleotide-gated ion channel. Permeable to potassium and calcium in a cyclic nucleotide-dependent fashion (cAMP or cGMP). Could also transport lithium, cesium and rubium and displays a strong selectivity against sodium. Seems to directly participate in pathogen-induced calcium influx. May function in homeostasis, re-establishing ionic balance after defense action and/or other stimuli. Could mediate the initiation of the developmentally regulated cell death programs. This chain is Cyclic nucleotide-gated ion channel 2 (CNGC2), found in Arabidopsis thaliana (Mouse-ear cress).